Consider the following 319-residue polypeptide: D-galacturonate reductase (319 aa).

Y58 acts as the Proton donor in catalysis. H121 is a binding site for substrate. 216–275 (SPLGAARTKWGDDRVLGSDIIEEIAQAKGKSTAQISLRWVYEQGVSIVTKSYNKERMRQN) is a binding site for NADP(+).

Belongs to the aldo/keto reductase family. As to expression, expressed specifically in the receptacle tissue of the fruit.

It catalyses the reaction L-galactonate + NADP(+) = aldehydo-D-galacturonate + NADPH + H(+). The protein operates within cofactor biosynthesis; L-ascorbate biosynthesis. In terms of biological role, involved in ascorbic acid (vitamin C) biosynthesis. The protein is D-galacturonate reductase (GALUR) of Fragaria ananassa (Strawberry).